The following is a 395-amino-acid chain: MAVFGMVSAVSGFIKIRYLLDKAVIDNMVFRCHYRITTAILFTCCIIVTANNLIGDPISCINDGAIPMHVINTFCWITYTYTIPGQQHRQIGTDVAGPGLGNEYGQEKRYHSYYQWVPFVLFFQGLMFYVPHWVWKNMEDGKIRMITDGLRGMVSVPDDYRRDRQDRILKYFVNSLNTHNGYSFAYFFCELLNFINVIVNIFMVDKFLGGAFMSYGTDVLKFSNMDQDKRFDPMIEIFPRLTKCTFHKFGPSGSVQKHDTLCVLALNILNEKIYIFLWFWFIILATISGVAVLYSLVVIMMPTTRETIIKRSYRSAQRKEIAGLVRRLEIGDFLILHFLSQNLSTRSYSDMLQQLCGLLGASRTPSAPSTLEMNRISHPIYPPVETFGGGKETET.

Over 1–37 (MAVFGMVSAVSGFIKIRYLLDKAVIDNMVFRCHYRIT) the chain is Cytoplasmic. Residues 38 to 58 (TAILFTCCIIVTANNLIGDPI) form a helical membrane-spanning segment. Residues 59 to 114 (SCINDGAIPMHVINTFCWITYTYTIPGQQHRQIGTDVAGPGLGNEYGQEKRYHSYY) lie on the Extracellular side of the membrane. Residues 115 to 135 (QWVPFVLFFQGLMFYVPHWVW) traverse the membrane as a helical segment. The Cytoplasmic segment spans residues 136–183 (KNMEDGKIRMITDGLRGMVSVPDDYRRDRQDRILKYFVNSLNTHNGYS). A helical membrane pass occupies residues 184 to 204 (FAYFFCELLNFINVIVNIFMV). Over 205-272 (DKFLGGAFMS…VLALNILNEK (68 aa)) the chain is Extracellular. The helical transmembrane segment at 273–293 (IYIFLWFWFIILATISGVAVL) threads the bilayer. Topologically, residues 294–395 (YSLVVIMMPT…TFGGGKETET (102 aa)) are cytoplasmic. 2 positions are modified to phosphoserine: S366 and S377. A Phosphotyrosine modification is found at Y381.

This sequence belongs to the pannexin family. Heterooligomer of Inx2 (via cytoplasmic C-terminal region) and Inx3 (via cytoplasmic C-terminal region). As to expression, in ovary, expressed in nurse cells and follicle cells. Expressed in embryonic epithelial cells. Ubiquitously expressed in stage 5 embryos. Expressed in foregut and hindgut from stage 11-17 and in proventriculus, epidermis and CNS in stage 16 embryos (at protein level). Expressed in anterior and ventral regions in stage 8 embryos. Repeating epidermal pattern emerges at stage 11, refines to one or two cells at each side of the segment borders by stage 13. Expressed in the imaginal wing disk. In pupae, expressed in the CNS and in secondary and tertiary pigment cells of the retina.

The protein resides in the cell membrane. Its subcellular location is the cell junction. It localises to the gap junction. It is found in the cytoplasm. The protein localises to the lateral cell membrane. The protein resides in the apicolateral cell membrane. Functionally, structural components of the gap junctions. Essential for proper epithelial development of the epidermis. In Drosophila melanogaster (Fruit fly), this protein is Innexin inx3 (Inx3).